We begin with the raw amino-acid sequence, 880 residues long: MKKLTSTEIRQKWLDFFESKNHLVIESKSLIPVNDSSLLWINSGVATLKNYFSGKKVPPAFRLTNSQKAIRTNDIENVGVTSRHHTFFEMLGNFSIGNYFKKEAIAYAKEFLVNVLEMDFEKLYFTYYEEDLEAKNYWLENGVDESHLISGTRDTNFWDLGSGPCGPCTEIFYDRGEKYDRRGLDLLKNDIENDRYIEIWNIVFSQFNNDGEGNYTELKQKNIDTGAGLERLASIMQDVPTNYDSDLFINIIREIEKYSPYKYVIENYFAKDEHQGEINTNFKIIADHIRTVVNAIADGAKVSNVGRGYIIRRLLRRSYYKGMQLGIKDLFLHKLVKVVKDSLPYEYNEKDVIDAIKEEELLFSKTIEKGKILLESFLDNENKVFDGAVAFNLLETYGFPIELTAEILHQKGISVDMDAFELAKEKHALASKGGKATGMDKVINSLALIDKKMDNFVGYSELSANSKVLKLFDEENEVEGFETGGYVLLETTPFYATSGGQRHDKGFIIQGENKIKIIDVFKDKFGNHIHFVEGKMNNHEPVSSFVDPNIRIGLERNHSGTHLLFCALRNVLGSHIEQLGSDNNEERLTFDFPADEKPSDEQIKAVEDLVRSYITKSIDREYITTTVDKAREMGAIMTLEEGEYMDPRAIRVVRFGDITSDLCGGTHLSNTSKLESFKITNVEKKQAGVFRIRAISSSKLVNEYLSKVNKKLNEELATIIKKIKELKSDYVAPAINENEPDIETLNASINKRIDELREVYKQLLKESSNLEFDYETVKFDKIKDYDVYINLDVDASAVKLIAASIRDKFQLGKTVAIIGSKNENELLLAIATRAIDANKMFKKLASELNGRGGGAPILAMGKMNYSEDIESLIKDYLPDA.

Zn(2+) is bound by residues His-558, His-562, Cys-663, and His-667.

It belongs to the class-II aminoacyl-tRNA synthetase family. Zn(2+) serves as cofactor.

The protein resides in the cytoplasm. It carries out the reaction tRNA(Ala) + L-alanine + ATP = L-alanyl-tRNA(Ala) + AMP + diphosphate. Its function is as follows. Catalyzes the attachment of alanine to tRNA(Ala) in a two-step reaction: alanine is first activated by ATP to form Ala-AMP and then transferred to the acceptor end of tRNA(Ala). Also edits incorrectly charged Ser-tRNA(Ala) and Gly-tRNA(Ala) via its editing domain. This Mycoplasmopsis agalactiae (strain NCTC 10123 / CIP 59.7 / PG2) (Mycoplasma agalactiae) protein is Alanine--tRNA ligase.